The following is a 134-amino-acid chain: Protein LctB (134 aa).

In Geobacillus stearothermophilus (Bacillus stearothermophilus), this protein is Protein LctB (lctB).